A 351-amino-acid polypeptide reads, in one-letter code: Glycerol-1-phosphate dehydrogenase [NAD(P)+] (351 aa).

NAD(+)-binding positions include 97–101 and 119–122; these read GKVID and TSPS. Residue D124 participates in substrate binding. S128 is a binding site for NAD(+). D171 contributes to the substrate binding site. The Zn(2+) site is built by D171 and H251. Substrate is bound at residue H255. H267 is a binding site for Zn(2+).

This sequence belongs to the glycerol-1-phosphate dehydrogenase family. Homodimer. Zn(2+) is required as a cofactor.

The protein resides in the cytoplasm. The catalysed reaction is sn-glycerol 1-phosphate + NAD(+) = dihydroxyacetone phosphate + NADH + H(+). The enzyme catalyses sn-glycerol 1-phosphate + NADP(+) = dihydroxyacetone phosphate + NADPH + H(+). The protein operates within membrane lipid metabolism; glycerophospholipid metabolism. In terms of biological role, catalyzes the NAD(P)H-dependent reduction of dihydroxyacetonephosphate (DHAP or glycerone phosphate) to glycerol 1-phosphate (G1P). The G1P thus generated is used as the glycerophosphate backbone of phospholipids in the cellular membranes of Archaea. In Saccharolobus solfataricus (strain ATCC 35092 / DSM 1617 / JCM 11322 / P2) (Sulfolobus solfataricus), this protein is Glycerol-1-phosphate dehydrogenase [NAD(P)+].